Consider the following 193-residue polypeptide: dCTP deaminase (193 aa).

DCTP-binding positions include 110-115 (RSSLAR), D128, 136-138 (VLE), Y171, K178, and Q182. The active-site Proton donor/acceptor is E138. Residues 169–193 (RPYNRRQDAKYKDQQGAVASRIDKD) are disordered.

This sequence belongs to the dCTP deaminase family. Homotrimer.

The enzyme catalyses dCTP + H2O + H(+) = dUTP + NH4(+). The protein operates within pyrimidine metabolism; dUMP biosynthesis; dUMP from dCTP (dUTP route): step 1/2. Its function is as follows. Catalyzes the deamination of dCTP to dUTP. The chain is dCTP deaminase from Pectobacterium atrosepticum (strain SCRI 1043 / ATCC BAA-672) (Erwinia carotovora subsp. atroseptica).